A 278-amino-acid chain; its full sequence is Hydroxyethylthiazole kinase (278 aa).

Methionine 49 serves as a coordination point for substrate. 2 residues coordinate ATP: asparagine 125 and serine 171. Residue glycine 198 coordinates substrate.

Belongs to the Thz kinase family. It depends on Mg(2+) as a cofactor.

It carries out the reaction 5-(2-hydroxyethyl)-4-methylthiazole + ATP = 4-methyl-5-(2-phosphooxyethyl)-thiazole + ADP + H(+). Its pathway is cofactor biosynthesis; thiamine diphosphate biosynthesis; 4-methyl-5-(2-phosphoethyl)-thiazole from 5-(2-hydroxyethyl)-4-methylthiazole: step 1/1. In terms of biological role, catalyzes the phosphorylation of the hydroxyl group of 4-methyl-5-beta-hydroxyethylthiazole (THZ). The chain is Hydroxyethylthiazole kinase from Natronomonas pharaonis (strain ATCC 35678 / DSM 2160 / CIP 103997 / JCM 8858 / NBRC 14720 / NCIMB 2260 / Gabara) (Halobacterium pharaonis).